The following is a 269-amino-acid chain: Shikimate dehydrogenase (NADP(+)) (269 aa).

Residues 14 to 16 and Thr-61 each bind shikimate; that span reads SKS. Lys-65 serves as the catalytic Proton acceptor. Glu-77 contacts NADP(+). Shikimate contacts are provided by Asn-86 and Asp-102. NADP(+)-binding positions include 126–130, 149–154, and Met-213; these read GAGGA and NRTLSK. Position 215 (Tyr-215) interacts with shikimate. Gly-238 lines the NADP(+) pocket.

This sequence belongs to the shikimate dehydrogenase family. As to quaternary structure, homodimer.

It catalyses the reaction shikimate + NADP(+) = 3-dehydroshikimate + NADPH + H(+). It participates in metabolic intermediate biosynthesis; chorismate biosynthesis; chorismate from D-erythrose 4-phosphate and phosphoenolpyruvate: step 4/7. In terms of biological role, involved in the biosynthesis of the chorismate, which leads to the biosynthesis of aromatic amino acids. Catalyzes the reversible NADPH linked reduction of 3-dehydroshikimate (DHSA) to yield shikimate (SA). The chain is Shikimate dehydrogenase (NADP(+)) from Pasteurella multocida (strain Pm70).